Consider the following 224-residue polypeptide: DNA repair and recombination protein RadB (224 aa).

It belongs to the eukaryotic RecA-like protein family. RadB subfamily.

Functionally, involved in DNA repair and in homologous recombination. May regulate the cleavage reactions of the branch-structured DNA. Has a very weak ATPase activity that is not stimulated by DNA. Binds DNA but does not promote DNA strands exchange. This chain is DNA repair and recombination protein RadB, found in Methanoculleus marisnigri (strain ATCC 35101 / DSM 1498 / JR1).